We begin with the raw amino-acid sequence, 202 residues long: Phospholipase A2 inhibitor gamma subunit A (202 aa).

Residues 1–19 (MKSLQIICLLFIFVARGSC) form the signal peptide. Cystine bridges form between C22/C47, C25/C32, C40/C68, C74/C95, C96/C101, C119/C144, C137/C166, and C170/C192. N177 carries N-linked (GlcNAc...) asparagine glycosylation.

Belongs to the CNF-like-inhibitor family. In terms of assembly, heterodimer of subunit A and subunit B. Post-translationally, N-glycosylated. As to expression, expressed by the liver. Not expressed in esophagus, stomach, pancreas, spleen, gall bladder, small intestine, rectum, kidney, trachea, lung, testis and body fat.

The protein resides in the secreted. In terms of biological role, inhibits the enzymatic activity of all phospholipase A2 (PA2) groups. The polypeptide is Phospholipase A2 inhibitor gamma subunit A (Elaphe quadrivirgata (Japanese four-lined ratsnake)).